The following is a 463-amino-acid chain: ATP synthase subunit beta (463 aa).

152-159 (GGAGVGKT) contributes to the ATP binding site.

It belongs to the ATPase alpha/beta chains family. As to quaternary structure, F-type ATPases have 2 components, CF(1) - the catalytic core - and CF(0) - the membrane proton channel. CF(1) has five subunits: alpha(3), beta(3), gamma(1), delta(1), epsilon(1). CF(0) has three main subunits: a(1), b(2) and c(9-12). The alpha and beta chains form an alternating ring which encloses part of the gamma chain. CF(1) is attached to CF(0) by a central stalk formed by the gamma and epsilon chains, while a peripheral stalk is formed by the delta and b chains.

It is found in the cell inner membrane. The catalysed reaction is ATP + H2O + 4 H(+)(in) = ADP + phosphate + 5 H(+)(out). Functionally, produces ATP from ADP in the presence of a proton gradient across the membrane. The catalytic sites are hosted primarily by the beta subunits. The polypeptide is ATP synthase subunit beta (Shewanella putrefaciens (strain CN-32 / ATCC BAA-453)).